Consider the following 319-residue polypeptide: tRNA uridine(34) hydroxylase (319 aa).

Positions Lys-127–Glu-221 constitute a Rhodanese domain. The active-site Cysteine persulfide intermediate is Cys-181.

It belongs to the TrhO family.

The catalysed reaction is uridine(34) in tRNA + AH2 + O2 = 5-hydroxyuridine(34) in tRNA + A + H2O. Functionally, catalyzes oxygen-dependent 5-hydroxyuridine (ho5U) modification at position 34 in tRNAs. The protein is tRNA uridine(34) hydroxylase of Bacillus cereus (strain AH187).